The sequence spans 157 residues: 2-C-methyl-D-erythritol 2,4-cyclodiphosphate synthase (157 aa).

Asp-9 and His-11 together coordinate a divalent metal cation. 4-CDP-2-C-methyl-D-erythritol 2-phosphate is bound by residues Asp-9–His-11 and His-35–Ser-36. His-43 contributes to the a divalent metal cation binding site. Residues Asp-57–Gly-59, Phe-62–Asp-66, Ala-101–Ala-107, Thr-133–Glu-136, Phe-140, and Arg-143 each bind 4-CDP-2-C-methyl-D-erythritol 2-phosphate.

Belongs to the IspF family. As to quaternary structure, homotrimer. Requires a divalent metal cation as cofactor.

It carries out the reaction 4-CDP-2-C-methyl-D-erythritol 2-phosphate = 2-C-methyl-D-erythritol 2,4-cyclic diphosphate + CMP. The protein operates within isoprenoid biosynthesis; isopentenyl diphosphate biosynthesis via DXP pathway; isopentenyl diphosphate from 1-deoxy-D-xylulose 5-phosphate: step 4/6. In terms of biological role, involved in the biosynthesis of isopentenyl diphosphate (IPP) and dimethylallyl diphosphate (DMAPP), two major building blocks of isoprenoid compounds. Catalyzes the conversion of 4-diphosphocytidyl-2-C-methyl-D-erythritol 2-phosphate (CDP-ME2P) to 2-C-methyl-D-erythritol 2,4-cyclodiphosphate (ME-CPP) with a corresponding release of cytidine 5-monophosphate (CMP). The sequence is that of 2-C-methyl-D-erythritol 2,4-cyclodiphosphate synthase from Listeria monocytogenes serotype 4b (strain F2365).